The primary structure comprises 395 residues: Imidazolonepropionase (395 aa).

Histidine 63 and histidine 65 together coordinate Fe(3+). Histidine 63 and histidine 65 together coordinate Zn(2+). 4-imidazolone-5-propanoate-binding residues include arginine 72, tyrosine 135, and histidine 168. Tyrosine 135 serves as a coordination point for N-formimidoyl-L-glutamate. Histidine 233 contacts Fe(3+). Histidine 233 is a binding site for Zn(2+). Glutamine 236 contacts 4-imidazolone-5-propanoate. Aspartate 308 contributes to the Fe(3+) binding site. Residue aspartate 308 coordinates Zn(2+). Positions 310 and 312 each coordinate N-formimidoyl-L-glutamate. Threonine 313 provides a ligand contact to 4-imidazolone-5-propanoate.

This sequence belongs to the metallo-dependent hydrolases superfamily. HutI family. Zn(2+) is required as a cofactor. The cofactor is Fe(3+).

The protein resides in the cytoplasm. The catalysed reaction is 4-imidazolone-5-propanoate + H2O = N-formimidoyl-L-glutamate. Its pathway is amino-acid degradation; L-histidine degradation into L-glutamate; N-formimidoyl-L-glutamate from L-histidine: step 3/3. Functionally, catalyzes the hydrolytic cleavage of the carbon-nitrogen bond in imidazolone-5-propanoate to yield N-formimidoyl-L-glutamate. It is the third step in the universal histidine degradation pathway. The polypeptide is Imidazolonepropionase (Cereibacter sphaeroides (strain ATCC 17023 / DSM 158 / JCM 6121 / CCUG 31486 / LMG 2827 / NBRC 12203 / NCIMB 8253 / ATH 2.4.1.) (Rhodobacter sphaeroides)).